A 471-amino-acid polypeptide reads, in one-letter code: Putative multidrug resistance protein MdtD (471 aa).

Topologically, residues Met-1–Gln-11 are periplasmic. A helical membrane pass occupies residues Leu-12 to Ala-32. The Cytoplasmic portion of the chain corresponds to Leu-33–His-48. A helical membrane pass occupies residues Met-49–Ala-69. Residues Asp-70 to Asn-76 are Periplasmic-facing. A helical transmembrane segment spans residues Ile-77–Thr-97. At Leu-98–Leu-101 the chain is on the cytoplasmic side. Residues Leu-102 to Met-124 traverse the membrane as a helical segment. Over Lys-125 to Thr-137 the chain is Periplasmic. The chain crosses the membrane as a helical span at residues Phe-138–Val-158. Topologically, residues Glu-159–His-164 are cytoplasmic. Residues Trp-165–Met-185 form a helical membrane-spanning segment. Residues Pro-186 to Asp-196 are Periplasmic-facing. The helical transmembrane segment at Leu-197 to Ser-217 threads the bilayer. Topologically, residues Lys-218–Pro-224 are cytoplasmic. A helical membrane pass occupies residues Leu-225 to Ala-245. The Periplasmic segment spans residues Arg-246–Thr-262. A helical transmembrane segment spans residues Phe-263–Met-283. Topologically, residues Thr-284–Pro-285 are cytoplasmic. The chain crosses the membrane as a helical span at residues Val-286–Met-306. Over Val-307–Thr-341 the chain is Periplasmic. A helical membrane pass occupies residues Leu-342–Leu-362. Over Gln-363–Ser-395 the chain is Cytoplasmic. Residues Met-396–Phe-416 form a helical membrane-spanning segment. Residues Gly-417–Thr-430 are Periplasmic-facing. Residues Val-431–Ala-451 traverse the membrane as a helical segment. The Cytoplasmic portion of the chain corresponds to Arg-452–Gln-471.

Belongs to the major facilitator superfamily. TCR/Tet family.

Its subcellular location is the cell inner membrane. This chain is Putative multidrug resistance protein MdtD, found in Shigella sonnei (strain Ss046).